The sequence spans 727 residues: Translation initiation factor IF-2, mitochondrial (727 aa).

The N-terminal 29 residues, 1–29 (MNRKILKLENLLRFHTICRQLHSLCQRRM), are a transit peptide targeting the mitochondrion. One can recognise a tr-type G domain in the interval 178 to 348 (PRSPVVTIMG…IALAEMLELK (171 aa)). A G1 region spans residues 187–194 (GHVDHGKT). 187–194 (GHVDHGKT) lines the GTP pocket. Residues 212–216 (GITQH) are G2. Residues 234–237 (DTPG) and 288–291 (NKCD) contribute to the GTP site. Residues 234–237 (DTPG) form a G3 region. Positions 288-291 (NKCD) are G4. Positions 324–326 (SAL) are G5. The residue at position 688 (threonine 688) is a Phosphothreonine.

This sequence belongs to the TRAFAC class translation factor GTPase superfamily. Classic translation factor GTPase family. IF-2 subfamily. As to quaternary structure, monomer.

It localises to the mitochondrion. Functionally, one of the essential components for the initiation of protein synthesis. Protects formylmethionyl-tRNA from spontaneous hydrolysis and promotes its binding to the 30S ribosomal subunits. Also involved in the hydrolysis of GTP during the formation of the 70S ribosomal complex. This Bos taurus (Bovine) protein is Translation initiation factor IF-2, mitochondrial (MTIF2).